We begin with the raw amino-acid sequence, 339 residues long: Phenylalanine--tRNA ligase alpha subunit (339 aa).

Residue Glu253 participates in Mg(2+) binding.

The protein belongs to the class-II aminoacyl-tRNA synthetase family. Phe-tRNA synthetase alpha subunit type 1 subfamily. As to quaternary structure, tetramer of two alpha and two beta subunits. Requires Mg(2+) as cofactor.

It localises to the cytoplasm. The enzyme catalyses tRNA(Phe) + L-phenylalanine + ATP = L-phenylalanyl-tRNA(Phe) + AMP + diphosphate + H(+). The chain is Phenylalanine--tRNA ligase alpha subunit from Ruthia magnifica subsp. Calyptogena magnifica.